Consider the following 309-residue polypeptide: Ribosomal RNA small subunit methyltransferase H (309 aa).

Residues 33–35 (GGH), Asp-53, Phe-79, Asp-100, and Gln-107 contribute to the S-adenosyl-L-methionine site.

Belongs to the methyltransferase superfamily. RsmH family.

The protein localises to the cytoplasm. The enzyme catalyses cytidine(1402) in 16S rRNA + S-adenosyl-L-methionine = N(4)-methylcytidine(1402) in 16S rRNA + S-adenosyl-L-homocysteine + H(+). Specifically methylates the N4 position of cytidine in position 1402 (C1402) of 16S rRNA. The polypeptide is Ribosomal RNA small subunit methyltransferase H (Clostridium botulinum (strain ATCC 19397 / Type A)).